A 287-amino-acid chain; its full sequence is Telomere repeat-binding factor 5 (287 aa).

An HTH myb-type domain is found at 1 to 62 (MGNQKLKWTA…WRNLSVPPGT (62 aa)). Residues 28-58 (WKNILRDPEFADQLIHRSNIDLKDKWRNLSV) constitute a DNA-binding region (H-T-H motif). The tract at residues 58 to 107 (VPPGTQSLTNKARPAKVKEEGDTPAADANDAVTIPRPIPTIPPPPGRRTL) is disordered. Positions 93–103 (RPIPTIPPPPG) are enriched in pro residues. One can recognise an H15 domain in the interval 119–193 (NAPRYDGVIF…SIQNFYKIPD (75 aa)). Positions 233-259 (AACKVVEAENKIDVAKLAAEEFEKMTK) form a coiled coil.

The protein belongs to the histone H1/H5 family. SMH subfamily.

Its subcellular location is the nucleus. It is found in the chromosome. Functionally, binds preferentially double-stranded telomeric repeats. The chain is Telomere repeat-binding factor 5 from Arabidopsis thaliana (Mouse-ear cress).